Consider the following 69-residue polypeptide: Conotoxin Cal12.1p4 (69 aa).

Residues 1 to 23 (DLITNSYTRGKPRHVTSWRNLKT) constitute a propeptide that is removed on maturation.

Post-translationally, contains 4 disulfide bonds. Expressed by the venom duct.

The protein resides in the secreted. This chain is Conotoxin Cal12.1p4, found in Californiconus californicus (California cone).